Reading from the N-terminus, the 302-residue chain is Putative receptor-like protein 16 (302 aa).

LRR repeat units follow at residues 1–19 (MNLT…LGNM), 20–43 (EMIE…FLKG), and 45–70 (DSLI…NFFS). The stretch at 72-91 (LELSMDNNLFTGKIGRGLQS) is one LRR 4; degenerate repeat. LRR repeat units follow at residues 92–115 (LRSL…WFDQ), 116–140 (LQDL…LFNM), 142–164 (SLQL…ISGY), 166–188 (ALKV…LLGK), 190–211 (IIVL…INTQ), 213–234 (IRIL…LCAV), and 235–258 (RSIH…LRNA).

This sequence belongs to the RLP family.

The polypeptide is Putative receptor-like protein 16 (Arabidopsis thaliana (Mouse-ear cress)).